A 2157-amino-acid polypeptide reads, in one-letter code: Genome polyprotein (2157 aa).

Residue Gly-2 is the site of N-myristoyl glycine; by host attachment. Over 2–1470 the chain is Cytoplasmic; the sequence is GAQVSRQNVG…DLNIANSIIA (1469 aa). The segment at 567–584 is amphipathic alpha-helix; sequence PIEQNPVENYIDEVLNEV. Residues His-875 and Asp-892 each act as for protease 2A activity in the active site. Zn(2+) is bound by residues Cys-909 and Cys-911. Cys-963 acts as the For protease 2A activity in catalysis. Zn(2+) is bound by residues Cys-969 and His-971. The segment at 1095-1164 is membrane-binding; sequence SDSWLKKFTE…NLRAADSATQ (70 aa). The interval 1095 to 1228 is oligomerization; it reads SDSWLKKFTE…PPGTGKSITT (134 aa). Positions 1116–1120 are RNA-binding; it reads GNKIS. The SF3 helicase domain occupies 1188 to 1350; that stretch reads EAKRIKVLYN…YKDTQGKLDV (163 aa). Residues Cys-1357, Cys-1368, and Cys-1373 each contribute to the Zn(2+) site. The C4-type; degenerate zinc finger occupies 1357 to 1373; that stretch reads CNVNTKIGNAKCCPFVC. The segment at 1400 to 1407 is RNA-binding; that stretch reads EDKRRRQV. The tract at residues 1411–1416 is oligomerization; the sequence is MSAIFQ. An intramembrane segment occupies 1471–1486; sequence IIANIISIAGIIFVIY. The Cytoplasmic segment spans residues 1487-2157; that stretch reads KLFCSLQGPY…LLKHEWYEKF (671 aa). Position 1496 is an O-(5'-phospho-RNA)-tyrosine (Tyr-1496). The Peptidase C3 domain occupies 1515 to 1693; it reads GPEEEFGRSI…FSAMLLRSYF (179 aa). Residues His-1554, Glu-1585, and Cys-1661 each act as for protease 3C activity in the active site. The region spanning 1925–2038 is the RdRp catalytic domain; it reads DCIMAFDYTN…SYKYTLDMEA (114 aa). Mg(2+) contacts are provided by Asp-1931 and Asp-2024.

It belongs to the picornaviruses polyprotein family. Interacts with capsid protein VP1 and capsid protein VP3 to form heterotrimeric protomers. As to quaternary structure, interacts with capsid protein VP0, and capsid protein VP3 to form heterotrimeric protomers. Five protomers subsequently associate to form pentamers which serve as building blocks for the capsid. Interacts with capsid protein VP2, capsid protein VP3 and capsid protein VP4 following cleavage of capsid protein VP0. In terms of assembly, interacts with capsid protein VP1 and capsid protein VP3 in the mature capsid. Interacts with capsid protein VP0 and capsid protein VP1 to form heterotrimeric protomers. Five protomers subsequently associate to form pentamers which serve as building blocks for the capsid. Interacts with capsid protein VP4 in the mature capsid. Interacts with protein 2C; this interaction may be important for virion morphogenesis. As to quaternary structure, interacts with capsid protein VP1 and capsid protein VP3. In terms of assembly, homodimer. Homohexamer; forms a hexameric ring structure with 6-fold symmetry characteristic of AAA+ ATPases. Interacts (via N-terminus) with host RTN3 (via reticulon domain); this interaction is important for viral replication. Interacts with capsid protein VP3; this interaction may be important for virion morphogenesis. As to quaternary structure, interacts with protein 3CD. In terms of assembly, homodimer. Interacts with host GBF1. Interacts (via GOLD domain) with host ACBD3 (via GOLD domain); this interaction allows the formation of a viral protein 3A/ACBD3 heterotetramer with a 2:2 stoichiometry, which will stimulate the recruitment of host PI4KB in order to synthesize PI4P at the viral RNA replication sites. Interacts with RNA-directed RNA polymerase. As to quaternary structure, interacts with protein 3AB and with RNA-directed RNA polymerase. In terms of assembly, interacts with Viral protein genome-linked and with protein 3CD. Requires Mg(2+) as cofactor. Post-translationally, specific enzymatic cleavages in vivo by the viral proteases yield processing intermediates and the mature proteins. Myristoylation is required for the formation of pentamers during virus assembly. Further assembly of 12 pentamers and a molecule of genomic RNA generates the provirion. In terms of processing, during virion maturation, immature virions are rendered infectious following cleavage of VP0 into VP4 and VP2. This maturation seems to be an autocatalytic event triggered by the presence of RNA in the capsid and it is followed by a conformational change infectious virion. Post-translationally, myristoylation is required during RNA encapsidation and formation of the mature virus particle. VPg is uridylylated by the polymerase into VPg-pUpU. This acts as a nucleotide-peptide primer for the genomic RNA replication.

Its subcellular location is the virion. The protein localises to the host cytoplasm. It is found in the host cytoplasmic vesicle membrane. It localises to the host nucleus. It carries out the reaction a ribonucleoside 5'-triphosphate + H2O = a ribonucleoside 5'-diphosphate + phosphate + H(+). The enzyme catalyses Selective cleavage of Tyr-|-Gly bond in the picornavirus polyprotein.. It catalyses the reaction RNA(n) + a ribonucleoside 5'-triphosphate = RNA(n+1) + diphosphate. The catalysed reaction is Selective cleavage of Gln-|-Gly bond in the poliovirus polyprotein. In other picornavirus reactions Glu may be substituted for Gln, and Ser or Thr for Gly.. Its activity is regulated as follows. Replication or transcription is subject to high level of random mutations by the nucleotide analog ribavirin. Its function is as follows. Forms an icosahedral capsid of pseudo T=3 symmetry with capsid proteins VP2 and VP3. The capsid is 300 Angstroms in diameter, composed of 60 copies of each capsid protein and enclosing the viral positive strand RNA genome. Capsid protein VP1 mainly forms the vertices of the capsid. Capsid protein VP1 interacts with host cell receptor to provide virion attachment to target host cells. This attachment induces virion internalization. Tyrosine kinases are probably involved in the entry process. After binding to its receptor, the capsid undergoes conformational changes. Capsid protein VP1 N-terminus (that contains an amphipathic alpha-helix) and capsid protein VP4 are externalized. Together, they shape a pore in the host membrane through which viral genome is translocated to host cell cytoplasm. In terms of biological role, forms an icosahedral capsid of pseudo T=3 symmetry with capsid proteins VP2 and VP3. The capsid is 300 Angstroms in diameter, composed of 60 copies of each capsid protein and enclosing the viral positive strand RNA genome. Lies on the inner surface of the capsid shell. After binding to the host receptor, the capsid undergoes conformational changes. Capsid protein VP4 is released, Capsid protein VP1 N-terminus is externalized, and together, they shape a pore in the host membrane through which the viral genome is translocated into the host cell cytoplasm. Functionally, component of immature procapsids, which is cleaved into capsid proteins VP4 and VP2 after maturation. Allows the capsid to remain inactive before the maturation step. Its function is as follows. Cysteine protease that cleaves viral polyprotein and specific host proteins. It is responsible for the autocatalytic cleavage between the P1 and P2 regions, which is the first cleavage occurring in the polyprotein. Also cleaves the host translation initiation factor EIF4G1, in order to shut down the capped cellular mRNA translation. Inhibits the host nucleus-cytoplasm protein and RNA trafficking by cleaving host members of the nuclear pores. Counteracts stress granule formation probably by antagonizing its assembly or promoting its dissassembly. In terms of biological role, plays an essential role in the virus replication cycle by acting as a viroporin. Creates a pore in the host endoplasmic reticulum and as a consequence releases Ca2+ in the cytoplasm of infected cell. In turn, high levels of cytoplasmic calcium may trigger membrane trafficking and transport of viral ER-associated proteins to viroplasms, sites of viral genome replication. Induces and associates with structural rearrangements of intracellular membranes. Displays RNA-binding, nucleotide binding and NTPase activities. May play a role in virion morphogenesis and viral RNA encapsidation by interacting with the capsid protein VP3. Functionally, localizes the viral replication complex to the surface of membranous vesicles. Together with protein 3CD binds the Cis-Active RNA Element (CRE) which is involved in RNA synthesis initiation. Acts as a cofactor to stimulate the activity of 3D polymerase, maybe through a nucleid acid chaperone activity. Its function is as follows. Localizes the viral replication complex to the surface of membranous vesicles. It inhibits host cell endoplasmic reticulum-to-Golgi apparatus transport and causes the disassembly of the Golgi complex, possibly through GBF1 interaction. This would result in depletion of MHC, trail receptors and IFN receptors at the host cell surface. Plays an essential role in viral RNA replication by recruiting ACBD3 and PI4KB at the viral replication sites, thereby allowing the formation of the rearranged membranous structures where viral replication takes place. In terms of biological role, acts as a primer for viral RNA replication and remains covalently bound to viral genomic RNA. VPg is uridylylated prior to priming replication into VPg-pUpU. The oriI viral genomic sequence may act as a template for this. The VPg-pUpU is then used as primer on the genomic RNA poly(A) by the RNA-dependent RNA polymerase to replicate the viral genome. During genome replication, the VPg-RNA linkage is removed by the host TDP2, thereby accelerating replication. During the late stage of the replication cycle, host TDP2 is excluded from sites of viral RNA synthesis and encapsidation, allowing for the generation of progeny virions. Involved in the viral replication complex and viral polypeptide maturation. It exhibits protease activity with a specificity and catalytic efficiency that is different from protease 3C. Protein 3CD lacks polymerase activity. Protein 3CD binds to the 5'UTR of the viral genome. Functionally, major viral protease that mediates proteolytic processing of the polyprotein. Cleaves host EIF5B, contributing to host translation shutoff. Also cleaves host PABPC1, contributing to host translation shutoff. Its function is as follows. Replicates the viral genomic RNA on the surface of intracellular membranes. May form linear arrays of subunits that propagate along a strong head-to-tail interaction called interface-I. Covalently attaches UMP to a tyrosine of VPg, which is used to prime RNA synthesis. The positive stranded RNA genome is first replicated at virus induced membranous vesicles, creating a dsRNA genomic replication form. This dsRNA is then used as template to synthesize positive stranded RNA genomes. ss(+)RNA genomes are either translated, replicated or encapsidated. In Homo sapiens (Human), this protein is Genome polyprotein.